The chain runs to 1076 residues: Bifunctional glutamine synthetase adenylyltransferase/adenylyl-removing enzyme (1076 aa).

An adenylyl removase region spans residues 1–521 (MESSIFKPSS…LHLDIYYRPM (521 aa)). Positions 524–1076 (VNAQMENDQI…LERNRRRAQR (553 aa)) are adenylyl transferase. Residues 1042-1056 (TATASAATQQPQTAP) are compositionally biased toward low complexity. Residues 1042–1076 (TATASAATQQPQTAPRPRMHVIAPRLERNRRRAQR) form a disordered region.

This sequence belongs to the GlnE family. Mg(2+) serves as cofactor.

The catalysed reaction is [glutamine synthetase]-O(4)-(5'-adenylyl)-L-tyrosine + phosphate = [glutamine synthetase]-L-tyrosine + ADP. The enzyme catalyses [glutamine synthetase]-L-tyrosine + ATP = [glutamine synthetase]-O(4)-(5'-adenylyl)-L-tyrosine + diphosphate. Its function is as follows. Involved in the regulation of glutamine synthetase GlnA, a key enzyme in the process to assimilate ammonia. When cellular nitrogen levels are high, the C-terminal adenylyl transferase (AT) inactivates GlnA by covalent transfer of an adenylyl group from ATP to specific tyrosine residue of GlnA, thus reducing its activity. Conversely, when nitrogen levels are low, the N-terminal adenylyl removase (AR) activates GlnA by removing the adenylyl group by phosphorolysis, increasing its activity. The regulatory region of GlnE binds the signal transduction protein PII (GlnB) which indicates the nitrogen status of the cell. This chain is Bifunctional glutamine synthetase adenylyltransferase/adenylyl-removing enzyme, found in Bifidobacterium longum (strain NCC 2705).